The primary structure comprises 335 residues: Nucleoid-associated protein YejK (335 aa).

The protein belongs to the YejK family.

The protein localises to the cytoplasm. The protein resides in the nucleoid. The polypeptide is Nucleoid-associated protein YejK (Salmonella arizonae (strain ATCC BAA-731 / CDC346-86 / RSK2980)).